A 443-amino-acid chain; its full sequence is Probable D-serine dehydratase (443 aa).

Lys-116 carries the post-translational modification N6-(pyridoxal phosphate)lysine.

Belongs to the serine/threonine dehydratase family. DsdA subfamily. Requires pyridoxal 5'-phosphate as cofactor.

The catalysed reaction is D-serine = pyruvate + NH4(+). This chain is Probable D-serine dehydratase, found in Bacillus cereus (strain ATCC 14579 / DSM 31 / CCUG 7414 / JCM 2152 / NBRC 15305 / NCIMB 9373 / NCTC 2599 / NRRL B-3711).